The chain runs to 240 residues: Putative truncated effector protein hopW1-2 (240 aa).

The segment at 1–32 (MSPAQIIRTSHSFPPSFTGTSSSAENSHAQSP) is disordered. Residues 9–23 (TSHSFPPSFTGTSSS) show a composition bias toward low complexity.

This sequence belongs to the HopW family.

This Pseudomonas syringae pv. maculicola protein is Putative truncated effector protein hopW1-2 (hopW1-2).